Here is a 417-residue protein sequence, read N- to C-terminus: Serine hydroxymethyltransferase (417 aa).

(6S)-5,6,7,8-tetrahydrofolate-binding positions include L121 and 125-127; that span reads GHL. N6-(pyridoxal phosphate)lysine is present on K230. 355–357 contributes to the (6S)-5,6,7,8-tetrahydrofolate binding site; it reads SPF.

Belongs to the SHMT family. Homodimer. Pyridoxal 5'-phosphate serves as cofactor.

It localises to the cytoplasm. The catalysed reaction is (6R)-5,10-methylene-5,6,7,8-tetrahydrofolate + glycine + H2O = (6S)-5,6,7,8-tetrahydrofolate + L-serine. It participates in one-carbon metabolism; tetrahydrofolate interconversion. The protein operates within amino-acid biosynthesis; glycine biosynthesis; glycine from L-serine: step 1/1. Its function is as follows. Catalyzes the reversible interconversion of serine and glycine with tetrahydrofolate (THF) serving as the one-carbon carrier. This reaction serves as the major source of one-carbon groups required for the biosynthesis of purines, thymidylate, methionine, and other important biomolecules. Also exhibits THF-independent aldolase activity toward beta-hydroxyamino acids, producing glycine and aldehydes, via a retro-aldol mechanism. This is Serine hydroxymethyltransferase from Legionella pneumophila (strain Lens).